Here is a 119-residue protein sequence, read N- to C-terminus: Chorion class B protein M2807 (119 aa).

A left arm region spans residues 1–11 (GGLGGGCGRGF). Positions 12 to 80 (SGGGLPVATA…GNGAVGITRE (69 aa)) are central domain. A right arm (Gly-rich tandem repeats) region spans residues 81-119 (GGLGYGAGYGDGYGLGYGGYGGGYGLGYGGYGGCGCGCG).

Belongs to the chorion protein family.

This protein is one of many from the eggshell of the silk moth. This Bombyx mori (Silk moth) protein is Chorion class B protein M2807.